A 98-amino-acid polypeptide reads, in one-letter code: NADH-ubiquinone oxidoreductase chain 4L (98 aa).

3 helical membrane-spanning segments follow: residues Met-1 to Met-21, Ser-29 to Leu-49, and Ile-61 to Val-81.

It belongs to the complex I subunit 4L family. In terms of assembly, core subunit of respiratory chain NADH dehydrogenase (Complex I) which is composed of 45 different subunits.

It is found in the mitochondrion inner membrane. The catalysed reaction is a ubiquinone + NADH + 5 H(+)(in) = a ubiquinol + NAD(+) + 4 H(+)(out). In terms of biological role, core subunit of the mitochondrial membrane respiratory chain NADH dehydrogenase (Complex I) which catalyzes electron transfer from NADH through the respiratory chain, using ubiquinone as an electron acceptor. Part of the enzyme membrane arm which is embedded in the lipid bilayer and involved in proton translocation. This chain is NADH-ubiquinone oxidoreductase chain 4L (MT-ND4L), found in Leptonychotes weddellii (Weddell seal).